A 338-amino-acid polypeptide reads, in one-letter code: UDP-N-acetylenolpyruvoylglucosamine reductase (338 aa).

The 172-residue stretch at Ile17–Lys188 folds into the FAD-binding PCMH-type domain. The active site involves Arg164. The active-site Proton donor is Ser237. Residue Glu333 is part of the active site.

It belongs to the MurB family. FAD serves as cofactor.

The protein resides in the cytoplasm. It carries out the reaction UDP-N-acetyl-alpha-D-muramate + NADP(+) = UDP-N-acetyl-3-O-(1-carboxyvinyl)-alpha-D-glucosamine + NADPH + H(+). It participates in cell wall biogenesis; peptidoglycan biosynthesis. In terms of biological role, cell wall formation. The polypeptide is UDP-N-acetylenolpyruvoylglucosamine reductase (Porphyromonas gingivalis (strain ATCC BAA-308 / W83)).